Here is a 551-residue protein sequence, read N- to C-terminus: L-lactate permease (551 aa).

Transmembrane regions (helical) follow at residues 13–33, 37–57, 69–89, 131–151, 159–179, 194–214, 245–265, 306–326, 366–386, 405–425, 438–458, and 530–550; these read NIWL…FALI, LKGY…ALLF, VVYG…AAVF, GAAG…GLGF, LCLI…PILV, MVGR…MAIM, IGPE…LTLF, FLFL…ALFA, FDWF…SIVW, LALP…SNYS, TGSA…FLTG, and IFTC…TWMI.

This sequence belongs to the lactate permease family.

The protein localises to the cell inner membrane. The enzyme catalyses (S)-lactate(in) + H(+)(in) = (S)-lactate(out) + H(+)(out). The catalysed reaction is (R)-lactate(in) + H(+)(in) = (R)-lactate(out) + H(+)(out). It catalyses the reaction glycolate(in) + H(+)(in) = glycolate(out) + H(+)(out). Uptake of L-lactate across the membrane. Can also transport D-lactate and glycolate. Seems to be driven by a proton motive force. The protein is L-lactate permease (lldP) of Salmonella typhi.